Here is a 212-residue protein sequence, read N- to C-terminus: Methylthioribulose-1-phosphate dehydratase (212 aa).

Residues histidine 97 and histidine 99 each coordinate Zn(2+).

The protein belongs to the aldolase class II family. MtnB subfamily. In terms of assembly, homotetramer. Requires Zn(2+) as cofactor.

The catalysed reaction is 5-(methylsulfanyl)-D-ribulose 1-phosphate = 5-methylsulfanyl-2,3-dioxopentyl phosphate + H2O. It functions in the pathway amino-acid biosynthesis; L-methionine biosynthesis via salvage pathway; L-methionine from S-methyl-5-thio-alpha-D-ribose 1-phosphate: step 2/6. Catalyzes the dehydration of methylthioribulose-1-phosphate (MTRu-1-P) into 2,3-diketo-5-methylthiopentyl-1-phosphate (DK-MTP-1-P). The sequence is that of Methylthioribulose-1-phosphate dehydratase from Bacillus cereus (strain ATCC 10987 / NRS 248).